The primary structure comprises 239 residues: Tetratricopeptide repeat protein 9B (239 aa).

The segment at 1 to 54 is disordered; the sequence is MQRGALSPVLMLSAAPEPPPRPPPALSPPGPGSAPRHGSARSGPAPEPSGGLAA. Phosphoserine is present on residues Ser7 and Ser27. Residues 16–32 are compositionally biased toward pro residues; it reads PEPPPRPPPALSPPGPG. Residues 63 to 97 form a TPR 1 repeat; it reads AVAFKAEGQRCYREKKFREAIGKYHRALLQLKAAQ. The tract at residues 98–121 is disordered; that stretch reads GARPGGLPTPSPGPTTSPGPARLS. The span at 104-114 shows a compositional bias: pro residues; it reads LPTPSPGPTTS. The TPR 2 repeat unit spans residues 169 to 202; it reads FKATYRAGIAFYHLGDYARALRYLQEARSREPTD.

The protein belongs to the TTC9 family.

In Mus musculus (Mouse), this protein is Tetratricopeptide repeat protein 9B (Ttc9b).